The chain runs to 1196 residues: MGSEGNMKKSVVTQVSIGGFGESTTAKQLTDYLEDEVGIVWRCRLKTSWTPPGSYPNFEIADTSNIPSIDEYKKVEPHAFVHFAVFESAGRAMDAAGQCNLILDGQPLKVSLGPKNPYSLNQRRRTTVPYKLAGITLEIGTLVSRDDFFVSWRAEGVDFLVDPFDNTCKFCFRKSTAFSFKDAVMHAVINCDYKLELLVRDIQTVRQYKTLHGFVLILQLASSPRVWYRTADDDIYDTVPGDLLDDDDPWIRTTDFTQVGAIGRCHSYRVLISPRYENKLRTALDYFRMRRVQEERVRWPPRIRNEPCFGEPVSDHFFCIHHKEGISFEIMFLVNSVLHRGVFNQFQLTERFFDLLRNQPKDVNIASLKHLCTYKRPVFDAYKRLKLVQEWIQKNPKLLGSHEQSEDISEIRRLVITPTRAYCLPPEVELSNRVLRRYKAVAERFLRVTFMDESMQTINSNVLSYFVAPIVKDLTSSSFSQKTYVFKRVKSILTDGFKLCGRKYSFLAFSANQLRDRSAWFFAEDGKTRVSDIKTWMGKFKDKNVAKCAARMGLCFSSTYATVDVMPHEVDTEVPDIERNGYVFSDGIGTITPDLADEVMEKLKLDVHYSPCAYQIRYAGFKGVVARWPSKSDGIRLALRDSMKKFFSKHTILEICSWTRFQPGFLNRQIITLLSVLGVPDEIFWDMQESMLYKLNRILDDTDVAFEVLTASCAEQGNTAAIMLSAGFKPKTEPHLRGMLSSVRIAQLWGLREKSRIFVTSGRWLMGCLDEAGILEHGQCFIQVSKPSIENCFSKHGSRFKETKTDLEVVKGYVAIAKNPCLHPGDVRILEAVDVPQLHHMYDCLIFPQKGDRPHTNEASGSDLDGDLYFVAWDQKLIPPNRKSYPAMHYDAAEEKSLGRAVNHQDIIDFFARNLANEQLGTICNAHVVHADRSEYGAMDEECLLLAELAATAVDFPKTGKIVSMPFHLKPKLYPDFMGKEDYQTYKSNKILGRLYRRVKEVYDEDAEASSEESTDPSAIPYDAVLEIPGFEDLIPEAWGHKCLYDGQLIGLLGQYKVQKEEEIVTGHIWSMPKYTSKKQGELKERLKHSYNSLKKEFRKVFEETIPDHENLSEEEKNILYEKKASAWYHVTYHPEWVKKSLELQDPDESSHAAMLSFAWIAADYLARIKIRSREMGSIDSAKPVDSLAKFLAQRL.

This sequence belongs to the RdRP family. In terms of assembly, interacts with SGS3. Widely expressed.

The protein resides in the cytoplasmic granule. The protein localises to the nucleus. The catalysed reaction is RNA(n) + a ribonucleoside 5'-triphosphate = RNA(n+1) + diphosphate. Functionally, RNA-dependent RNA polymerase involved in post-transcriptional gene silencing (PTGS). Possesses ssRNA and ssDNA-dependent polymerase activity, but does not have priming activity. Possesses in vitro 3' nucleotidyltransferase activity in the presence of UTP as single nucleotide. Required for the production of 21 nucleotide trans-acting small interfering RNAs (ta-siRNAs) derived from TAS1, TAS2 and TAS3 endogenous transcripts. Acts in the RDR6/SGS3/DCL4/AGO7 ta-siRNA pathway involved in leaf developmental timing. Required for the production of natural siRNAs (nat-siRNAs) derived from cis-natural antisense transcripts. Required for the production of 24 nucleotide nat-siRNAs derived from the stress-related P5CDH-SRO5 antisense gene pair. Required for PTGS induced by transgene direct repeats. Plays an essential role in transitive silencing of transgenes by processing secondary siRNAs. This pathway, which requires DCL2 and DCL4, amplifies silencing by using the target RNA as substrate to generate secondary siRNAs, providing an efficient mechanism for long-distance silencing. Involved in the biogenesis of secondary siRNAs which require 22 nucleotide miRNAs associated to AGO1. Participates synergistically with AS1 and AS2 to proper plant development by repressing the miR165 and miR166 microRNAs (independently of AGO10) that may lead to mRNA degradation of genes in the class III HD-ZIP family. Required for the production of some small RNAs derived from the crucifer-infecting tobamovirus (TMV-cg). Required for sense virus-induced post-transcriptional gene silencing (S-PTGS). This chain is RNA-dependent RNA polymerase 6 (RDR6), found in Arabidopsis thaliana (Mouse-ear cress).